The following is a 478-amino-acid chain: MNKKIQDFFLSCKECILENPRSFYGSFSLGPFKNSQSLTVANALRRTLLAELSNIAITHLEIEGVTHEYSTLVGVRESVLDLLLNFKGIALKNTSPVTKPLFGYLQVRGPGVVRASDLKFPPMIQCVDPDQYIATLNENGKLILKFRISDFKNSQENLNFEVSKTFLNIPNFGHFDTSSFQNFENSNFFSSSFFASQKMIKSKRKTKFSQLKVDYLSSFGFSTQHKRSGLNQTQKFAMQHQNPFRIEKNQQDFNKNKNGNFDSQKNKTNSLWVDPLFNPILKVNYIIETIEPMQKNIPNEIVFIELWTNGSIHPRKAFYTALLYLKTMFDKLDCMRLLNYEFSNTMLESEKTSTKFFKTFEYDFRFYNSREDKTMKSFTPEKFFLPEEIEDVEKDYLLNLKNQADNTWNDLPLTNLNLPYRITKILAKNNFFVVGDLLKISPNELKKLSGIGNYCVFILQKRFEKLGLKLGSRNEKNL.

An alpha N-terminal domain (alpha-NTD) region spans residues 1–341 (MNKKIQDFFL…LDCMRLLNYE (341 aa)). The alpha C-terminal domain (alpha-CTD) stretch occupies residues 365-478 (RFYNSREDKT…KLGSRNEKNL (114 aa)).

This sequence belongs to the RNA polymerase alpha chain family. In terms of assembly, in plastids the minimal PEP RNA polymerase catalytic core is composed of four subunits: alpha, beta, beta', and beta''. When a (nuclear-encoded) sigma factor is associated with the core the holoenzyme is formed, which can initiate transcription.

It localises to the plastid. The protein resides in the chloroplast. The enzyme catalyses RNA(n) + a ribonucleoside 5'-triphosphate = RNA(n+1) + diphosphate. In terms of biological role, DNA-dependent RNA polymerase catalyzes the transcription of DNA into RNA using the four ribonucleoside triphosphates as substrates. This chain is DNA-directed RNA polymerase subunit alpha (rpoA), found in Tetradesmus obliquus (Green alga).